The sequence spans 703 residues: Arylphorin subunit beta (703 aa).

The signal sequence occupies residues 1-16 (MKTVIILAGLVALALG). Asn72 and Asn211 each carry an N-linked (GlcNAc...) asparagine glycan.

The protein belongs to the hemocyanin family. As to quaternary structure, arylphorin is a hexamer of subunits alpha and beta. Fat body.

Its subcellular location is the secreted. The protein resides in the extracellular space. Functionally, arylphorin is a larval storage protein (LSP) which may serve as a storage protein used primarily as a source of aromatic amino acids for protein synthesis during metamorphosis. It is a constituent of the sclerotizing system of the cuticle, and serves as a carrier for ecdysteroid hormone. In Manduca sexta (Tobacco hawkmoth), this protein is Arylphorin subunit beta.